The primary structure comprises 83 residues: Large ribosomal subunit protein bL31B (83 aa).

Belongs to the bacterial ribosomal protein bL31 family. Type B subfamily. Part of the 50S ribosomal subunit.

The chain is Large ribosomal subunit protein bL31B from Lactobacillus gasseri (strain ATCC 33323 / DSM 20243 / BCRC 14619 / CIP 102991 / JCM 1131 / KCTC 3163 / NCIMB 11718 / NCTC 13722 / AM63).